The sequence spans 69 residues: Sec-independent protein translocase protein TatA (69 aa).

The chain crosses the membrane as a helical span at residues 1 to 21 (MFGLGGQELILILLIILLLFG).

This sequence belongs to the TatA/E family. As to quaternary structure, forms a complex with TatC.

Its subcellular location is the cell inner membrane. Its function is as follows. Part of the twin-arginine translocation (Tat) system that transports large folded proteins containing a characteristic twin-arginine motif in their signal peptide across membranes. TatA could form the protein-conducting channel of the Tat system. This chain is Sec-independent protein translocase protein TatA, found in Chlorobium phaeovibrioides (strain DSM 265 / 1930) (Prosthecochloris vibrioformis (strain DSM 265)).